We begin with the raw amino-acid sequence, 146 residues long: Cyanate hydratase (146 aa).

Catalysis depends on residues arginine 87, glutamate 90, and serine 113.

It belongs to the cyanase family.

The catalysed reaction is cyanate + hydrogencarbonate + 3 H(+) = NH4(+) + 2 CO2. Catalyzes the reaction of cyanate with bicarbonate to produce ammonia and carbon dioxide. The chain is Cyanate hydratase from Marinomonas sp. (strain MWYL1).